The chain runs to 365 residues: Bifunctional chorismate mutase/prephenate dehydratase (365 aa).

The 96-residue stretch at 1–96 folds into the Chorismate mutase domain; that stretch reads MADQDQLKAL…SCLALEQPLK (96 aa). Substrate contacts are provided by R11, R28, K39, and E57. The 176-residue stretch at 97–272 folds into the Prephenate dehydratase domain; it reads VAYLGPEGTF…NSTRFLIIGN (176 aa). In terms of domain architecture, ACT spans 284–361; that stretch reads SIIVSMRNKP…VALKVLGSYP (78 aa).

It localises to the cytoplasm. The enzyme catalyses chorismate = prephenate. It catalyses the reaction prephenate + H(+) = 3-phenylpyruvate + CO2 + H2O. Its pathway is amino-acid biosynthesis; L-phenylalanine biosynthesis; phenylpyruvate from prephenate: step 1/1. The protein operates within metabolic intermediate biosynthesis; prephenate biosynthesis; prephenate from chorismate: step 1/1. Functionally, catalyzes the Claisen rearrangement of chorismate to prephenate and the decarboxylation/dehydration of prephenate to phenylpyruvate. The protein is Bifunctional chorismate mutase/prephenate dehydratase (pheA) of Pseudomonas aeruginosa (strain ATCC 15692 / DSM 22644 / CIP 104116 / JCM 14847 / LMG 12228 / 1C / PRS 101 / PAO1).